We begin with the raw amino-acid sequence, 112 residues long: Iron-sulfur cluster assembly protein CyaY (112 aa).

It belongs to the frataxin family.

Involved in iron-sulfur (Fe-S) cluster assembly. May act as a regulator of Fe-S biogenesis. The protein is Iron-sulfur cluster assembly protein CyaY of Janthinobacterium sp. (strain Marseille) (Minibacterium massiliensis).